Consider the following 159-residue polypeptide: Cytochrome c-type biogenesis protein CcmE (159 aa).

Residues 1 to 8 (MNLRRKNR) lie on the Cytoplasmic side of the membrane. Residues 9-29 (LWVVCAVLAGLALTTALVLYA) form a helical; Signal-anchor for type II membrane protein membrane-spanning segment. Over 30-159 (LRANIDLFYT…PQRADKDTSS (130 aa)) the chain is Periplasmic. Positions 129 to 159 (KHDENYTPPEVEKAMQENHRRPQRADKDTSS) are disordered. Positions 130 and 134 each coordinate heme.

This sequence belongs to the CcmE/CycJ family.

It is found in the cell inner membrane. Functionally, heme chaperone required for the biogenesis of c-type cytochromes. Transiently binds heme delivered by CcmC and transfers the heme to apo-cytochromes in a process facilitated by CcmF and CcmH. The chain is Cytochrome c-type biogenesis protein CcmE from Salmonella paratyphi A (strain ATCC 9150 / SARB42).